We begin with the raw amino-acid sequence, 292 residues long: Probable endonuclease lcl3 (292 aa).

Residues 1–27 (MRWPPWSSESTNDEQKQTPSSWLSSAA) form a disordered region. Residues 17-27 (QTPSSWLSSAA) are compositionally biased toward polar residues. A helical membrane pass occupies residues 45–61 (IIPTVVLTSGILIAVRF). One can recognise a TNase-like domain in the interval 83–250 (RSIFGQVTSV…KKRARGLWKD (168 aa)). R134 is an active-site residue. Position 139 (D139) interacts with Ca(2+). Catalysis depends on residues E142 and R182. The tract at residues 257-292 (GWESPREYKNRMGMGDPLPIEKGNGKGNGKGKIGQK) is disordered. The span at 281-292 (GKGNGKGKIGQK) shows a compositional bias: gly residues.

Belongs to the LCL3 family.

It localises to the mitochondrion. The protein resides in the membrane. This chain is Probable endonuclease lcl3 (lcl3), found in Penicillium rubens (strain ATCC 28089 / DSM 1075 / NRRL 1951 / Wisconsin 54-1255) (Penicillium chrysogenum).